Here is a 1274-residue protein sequence, read N- to C-terminus: Myosin-binding protein C, cardiac-type (1274 aa).

Position 1 is an N-acetylmethionine (Met1). Residue Ser47 is modified to Phosphoserine. Residues 107-141 (APAPAEATGAPGEAPAPAAELGESAPSPKGSSSAA) show a composition bias toward low complexity. The interval 107–153 (APAPAEATGAPGEAPAPAAELGESAPSPKGSSSAALNGPTPGAPDDP) is disordered. Residues 153–256 (PIGLFVMRPQ…FDCSNFNLTV (104 aa)) enclose the Ig-like C2-type 1 domain. Positions 208, 210, 223, and 225 each coordinate Zn(2+). Residues Ser275, Ser284, and Ser304 each carry the phosphoserine; by PKA and PKC modification. Phosphoserine occurs at positions 311 and 427. 4 Ig-like C2-type domains span residues 362–452 (STAF…VKEP), 453–543 (PVLI…VQEK), 544–633 (KLEV…HFME), and 645–771 (PKIH…VIDV). A disulfide bridge connects residues Cys436 and Cys443. The residue at position 550 (Ser550) is a Phosphoserine. Thr607 bears the Phosphothreonine mark. Fibronectin type-III domains lie at 774-870 (APAA…IGPP) and 872-967 (EPTH…VQEI). The Ig-like C2-type 6 domain maps to 971–1065 (PRLQLPRHLR…ATLVLQVVDK (95 aa)). Residues 1068 to 1163 (PPQDLRVTDA…TKEPVFIPRP (96 aa)) enclose the Fibronectin type-III 3 domain. The 94-residue stretch at 1181 to 1274 (PSFTQPLVNR…ECRLEVRVPQ (94 aa)) folds into the Ig-like C2-type 7 domain. An Omega-N-methylarginine modification is found at Arg1241.

The protein belongs to the immunoglobulin superfamily. MyBP family. Post-translationally, substrate for phosphorylation by PKA and PKC. Reversible phosphorylation appears to modulate contraction. In terms of processing, polyubiquitinated.

Thick filament-associated protein located in the crossbridge region of vertebrate striated muscle a bands. In vitro it binds MHC, F-actin and native thin filaments, and modifies the activity of actin-activated myosin ATPase. It may modulate muscle contraction or may play a more structural role. The sequence is that of Myosin-binding protein C, cardiac-type (MYBPC3) from Homo sapiens (Human).